The primary structure comprises 689 residues: MTTENFFAEIGTEELPPKALKKLATAFAENVENELKQAGLAFDKVEWFAAPRRLAVKVLNLAANQPSKEIEKRGPAVSAAFDAEGKPTKAAEGWARGCGITVDQAERLVTDKGEWLVHRAVIEGQPTKNLMLDIIAKSLANLPIPKTMRWGDKNVQFVRPVHTVTLLLGGELIEGEILGIASGRTIRGHRFLGEREFQISHADQYPSLLEEKGCVIADFNKRREMILTKSQEKATALGGVADIEDDLLDEVTSLVEFPNVLTAKFEERFLAVPAEALVYTMKGDQKYFPIYDKEGKLLPHFIFVSNINPVDPMPIIEGNEKVVRPRLSDAEFFFNTDKKQRLEDLLPRLQTVLFQQQLGTLLDKTKRIQSLAGEIAGQIGADKAKAERAGLLSKCDLMTNMVFEFTDTQGVMGMHYARHDGEDEEVAVALNEQYMPRFAGDNLPNSLVASSVALADKFDTLTGIFGIGQAPKGSADPFALRRAALGALRIIVEKNLSLDLADLVKKSAALFGDKLTNANVVDDVVDFMLGRFRAWYQDGGIAVDVIQAVLARRPTKPADFDARVRAVSHFRTLDSAEALAAANKRVSNILAKVAGEIRSEIDRTLLLEAEEKALAEQVLALQSELAPVFAKGDYQTALDRLACLREVVDNFFDKVMVNAEDEKLRQNRQAMLNVLRNLFLQVADISLLQ.

Belongs to the class-II aminoacyl-tRNA synthetase family. Tetramer of two alpha and two beta subunits.

The protein localises to the cytoplasm. The catalysed reaction is tRNA(Gly) + glycine + ATP = glycyl-tRNA(Gly) + AMP + diphosphate. This Actinobacillus succinogenes (strain ATCC 55618 / DSM 22257 / CCUG 43843 / 130Z) protein is Glycine--tRNA ligase beta subunit.